Here is a 147-residue protein sequence, read N- to C-terminus: Hemoglobin subunit beta-Y (147 aa).

The Globin domain occupies 3–147 (HFTAEEKAAI…VANALSLKYH (145 aa)). 2 residues coordinate heme b: H64 and H93.

Belongs to the globin family. Heterotetramer of two alpha chains and two beta chains.

Functionally, this is a minor early embryonic beta chain. This Mesocricetus auratus (Golden hamster) protein is Hemoglobin subunit beta-Y (HBBY).